A 1271-amino-acid chain; its full sequence is SR-related and CTD-associated factor 8 (1271 aa).

Positions Met1–Pro139 constitute a CID domain. Phosphothreonine is present on Thr6. Lys18 is covalently cross-linked (Glycyl lysine isopeptide (Lys-Gly) (interchain with G-Cter in SUMO1)). Basic and acidic residues predominate over residues Gly270 to Ile283. 3 disordered regions span residues Gly270–Ser289, Gln322–His354, and Glu384–Arg468. Ser273 bears the Phosphoserine mark. A compositionally biased stretch (polar residues) spans Lys327 to His354. Residues Val394–Ser443 are compositionally biased toward basic residues. Over residues Ser447–Lys461 the composition is skewed to basic and acidic residues. The region spanning Thr477 to Asn551 is the RRM domain. Position 615 is a phosphothreonine (Thr615). Residues Ser617 and Ser779 each carry the phosphoserine modification. A disordered region spans residues Thr899 to Met918. Positions Pro902–Ser912 are enriched in pro residues. Arg917, Arg927, and Arg938 each carry asymmetric dimethylarginine. 2 stretches are compositionally biased toward pro residues: residues Gly945 to Ser956 and His963 to Pro972. A disordered region spans residues Gly945 to Pro1064. Composition is skewed to basic and acidic residues over residues Glu1011–Ile1027 and Asp1034–Pro1064. Arg1073 is modified (asymmetric dimethylarginine). Residues Tyr1198–Thr1271 are disordered. Acidic residues predominate over residues Ala1255 to Thr1271.

As to quaternary structure, interacts with POLR2A; via C-terminal heptapeptide repeat domain (CTD) phosphorylated at 'Ser-2' and 'Ser-5'. Identified in a complex with CDC5L and other spliceosomal proteins.

The protein localises to the nucleus. It is found in the nucleus matrix. In terms of biological role, anti-terminator protein required to prevent early mRNA termination during transcription. Together with SCAF4, acts by suppressing the use of early, alternative poly(A) sites, thereby preventing the accumulation of non-functional truncated proteins. Mechanistically, associates with the phosphorylated C-terminal heptapeptide repeat domain (CTD) of the largest RNA polymerase II subunit (POLR2A), and subsequently binds nascent RNA upstream of early polyadenylation sites to prevent premature mRNA transcript cleavage and polyadenylation. Independently of SCAF4, also acts as a positive regulator of transcript elongation. The protein is SR-related and CTD-associated factor 8 of Homo sapiens (Human).